We begin with the raw amino-acid sequence, 71 residues long: DNA-directed RNA polymerase subunit omega (71 aa).

The protein belongs to the RNA polymerase subunit omega family. In terms of assembly, the RNAP catalytic core consists of 2 alpha, 1 beta, 1 beta' and 1 omega subunit. When a sigma factor is associated with the core the holoenzyme is formed, which can initiate transcription.

The enzyme catalyses RNA(n) + a ribonucleoside 5'-triphosphate = RNA(n+1) + diphosphate. Its function is as follows. Promotes RNA polymerase assembly. Latches the N- and C-terminal regions of the beta' subunit thereby facilitating its interaction with the beta and alpha subunits. In Azoarcus sp. (strain BH72), this protein is DNA-directed RNA polymerase subunit omega.